Reading from the N-terminus, the 510-residue chain is Bifunctional purine biosynthesis protein PurH (510 aa).

Residues Met1–Val145 form the MGS-like domain.

Belongs to the PurH family.

It catalyses the reaction (6R)-10-formyltetrahydrofolate + 5-amino-1-(5-phospho-beta-D-ribosyl)imidazole-4-carboxamide = 5-formamido-1-(5-phospho-D-ribosyl)imidazole-4-carboxamide + (6S)-5,6,7,8-tetrahydrofolate. It carries out the reaction IMP + H2O = 5-formamido-1-(5-phospho-D-ribosyl)imidazole-4-carboxamide. It participates in purine metabolism; IMP biosynthesis via de novo pathway; 5-formamido-1-(5-phospho-D-ribosyl)imidazole-4-carboxamide from 5-amino-1-(5-phospho-D-ribosyl)imidazole-4-carboxamide (10-formyl THF route): step 1/1. Its pathway is purine metabolism; IMP biosynthesis via de novo pathway; IMP from 5-formamido-1-(5-phospho-D-ribosyl)imidazole-4-carboxamide: step 1/1. In Lactiplantibacillus plantarum (strain ATCC BAA-793 / NCIMB 8826 / WCFS1) (Lactobacillus plantarum), this protein is Bifunctional purine biosynthesis protein PurH.